Here is a 102-residue protein sequence, read N- to C-terminus: UPF0328 protein ECU10_1820 (102 aa).

The protein belongs to the UPF0328 family.

The chain is UPF0328 protein ECU10_1820 from Encephalitozoon cuniculi (strain GB-M1) (Microsporidian parasite).